Consider the following 217-residue polypeptide: Pyridoxine/pyridoxamine 5'-phosphate oxidase (217 aa).

Residues 14 to 17 (RKSY) and lysine 72 each bind substrate. FMN-binding positions include 67–72 (RVVLIK), 82–83 (YT), arginine 88, and lysine 89. Residues tyrosine 129, arginine 133, and serine 137 each coordinate substrate. Residues 146 to 147 (QS) and tryptophan 190 each bind FMN. 196-198 (RLH) lines the substrate pocket. Residue arginine 200 coordinates FMN.

Belongs to the pyridoxamine 5'-phosphate oxidase family. As to quaternary structure, homodimer. It depends on FMN as a cofactor.

It carries out the reaction pyridoxamine 5'-phosphate + O2 + H2O = pyridoxal 5'-phosphate + H2O2 + NH4(+). The catalysed reaction is pyridoxine 5'-phosphate + O2 = pyridoxal 5'-phosphate + H2O2. It functions in the pathway cofactor metabolism; pyridoxal 5'-phosphate salvage; pyridoxal 5'-phosphate from pyridoxamine 5'-phosphate: step 1/1. Its pathway is cofactor metabolism; pyridoxal 5'-phosphate salvage; pyridoxal 5'-phosphate from pyridoxine 5'-phosphate: step 1/1. Functionally, catalyzes the oxidation of either pyridoxine 5'-phosphate (PNP) or pyridoxamine 5'-phosphate (PMP) into pyridoxal 5'-phosphate (PLP). The sequence is that of Pyridoxine/pyridoxamine 5'-phosphate oxidase from Acidovorax sp. (strain JS42).